Consider the following 126-residue polypeptide: Holo-[acyl-carrier-protein] synthase (126 aa).

Mg(2+) contacts are provided by Asp-8 and Glu-57.

This sequence belongs to the P-Pant transferase superfamily. AcpS family. Mg(2+) is required as a cofactor.

The protein resides in the cytoplasm. The catalysed reaction is apo-[ACP] + CoA = holo-[ACP] + adenosine 3',5'-bisphosphate + H(+). In terms of biological role, transfers the 4'-phosphopantetheine moiety from coenzyme A to a Ser of acyl-carrier-protein. In Vibrio cholerae serotype O1 (strain ATCC 39315 / El Tor Inaba N16961), this protein is Holo-[acyl-carrier-protein] synthase.